A 213-amino-acid polypeptide reads, in one-letter code: ATP-dependent dethiobiotin synthetase BioD (213 aa).

13 to 18 (GIGKTV) contacts ATP. Thr-17 is a binding site for Mg(2+). Lys-33 is a catalytic residue. Glu-100 contacts Mg(2+). ATP contacts are provided by residues 100-103 (EGAG) and 184-186 (PHL).

It belongs to the dethiobiotin synthetase family. Homodimer. Mg(2+) is required as a cofactor.

It localises to the cytoplasm. The catalysed reaction is (7R,8S)-7,8-diammoniononanoate + CO2 + ATP = (4R,5S)-dethiobiotin + ADP + phosphate + 3 H(+). It participates in cofactor biosynthesis; biotin biosynthesis; biotin from 7,8-diaminononanoate: step 1/2. Functionally, catalyzes a mechanistically unusual reaction, the ATP-dependent insertion of CO2 between the N7 and N8 nitrogen atoms of 7,8-diaminopelargonic acid (DAPA, also called 7,8-diammoniononanoate) to form a ureido ring. The protein is ATP-dependent dethiobiotin synthetase BioD of Rhodopseudomonas palustris (strain BisA53).